We begin with the raw amino-acid sequence, 264 residues long: Thymidylate synthase (264 aa).

Arginine 21 lines the dUMP pocket. Position 51 (histidine 51) interacts with (6R)-5,10-methylene-5,6,7,8-tetrahydrofolate. 126–127 contributes to the dUMP binding site; sequence RR. Catalysis depends on cysteine 146, which acts as the Nucleophile. DUMP contacts are provided by residues 166 to 169, asparagine 177, and 207 to 209; these read RSAD and HIY. Aspartate 169 lines the (6R)-5,10-methylene-5,6,7,8-tetrahydrofolate pocket. Position 263 (serine 263) interacts with (6R)-5,10-methylene-5,6,7,8-tetrahydrofolate.

Belongs to the thymidylate synthase family. Bacterial-type ThyA subfamily. As to quaternary structure, homodimer.

It is found in the cytoplasm. The catalysed reaction is dUMP + (6R)-5,10-methylene-5,6,7,8-tetrahydrofolate = 7,8-dihydrofolate + dTMP. It functions in the pathway pyrimidine metabolism; dTTP biosynthesis. In terms of biological role, catalyzes the reductive methylation of 2'-deoxyuridine-5'-monophosphate (dUMP) to 2'-deoxythymidine-5'-monophosphate (dTMP) while utilizing 5,10-methylenetetrahydrofolate (mTHF) as the methyl donor and reductant in the reaction, yielding dihydrofolate (DHF) as a by-product. This enzymatic reaction provides an intracellular de novo source of dTMP, an essential precursor for DNA biosynthesis. This is Thymidylate synthase from Phocaeicola vulgatus (strain ATCC 8482 / DSM 1447 / JCM 5826 / CCUG 4940 / NBRC 14291 / NCTC 11154) (Bacteroides vulgatus).